Reading from the N-terminus, the 62-residue chain is Overexpressed in colon carcinoma 1 protein homolog (62 aa).

The span at 1–16 shows a compositional bias: gly residues; the sequence is MGCGNSTAGGAGGRGA. Residues 1 to 62 form a disordered region; it reads MGCGNSTAGG…SGQTKAAPKD (62 aa).

This sequence belongs to the OCC1 family.

This is Overexpressed in colon carcinoma 1 protein homolog from Gallus gallus (Chicken).